Consider the following 39-residue polypeptide: Photosystem II reaction center protein J (39 aa).

Residues 9–29 form a helical membrane-spanning segment; that stretch reads LWLVATVGGIAVITVLGIFIY.

It belongs to the PsbJ family. PSII is composed of 1 copy each of membrane proteins PsbA, PsbB, PsbC, PsbD, PsbE, PsbF, PsbH, PsbI, PsbJ, PsbK, PsbL, PsbM, PsbT, PsbX, PsbY, PsbZ, Psb30/Ycf12, at least 3 peripheral proteins of the oxygen-evolving complex and a large number of cofactors. It forms dimeric complexes.

The protein resides in the plastid. Its subcellular location is the chloroplast thylakoid membrane. Its function is as follows. One of the components of the core complex of photosystem II (PSII). PSII is a light-driven water:plastoquinone oxidoreductase that uses light energy to abstract electrons from H(2)O, generating O(2) and a proton gradient subsequently used for ATP formation. It consists of a core antenna complex that captures photons, and an electron transfer chain that converts photonic excitation into a charge separation. The protein is Photosystem II reaction center protein J of Gracilaria tenuistipitata var. liui (Red alga).